The chain runs to 433 residues: Serine/threonine-protein kinase STK11 (433 aa).

Ser-31 bears the Phosphoserine mark. Residues Lys-44 and Lys-48 each carry the N6-acetyllysine modification. The sufficient for interaction with SIRT1 stretch occupies residues 45–90 (LIGKYLMGDLLGEGSYGKVKEVLDSETLCRRAVKILKKKKLRRIPN). In terms of domain architecture, Protein kinase spans 49–309 (YLMGDLLGEG…IRQIRQHSWF (261 aa)). Residues 55-63 (LGEGSYGKV) and Lys-78 each bind ATP. N6-acetyllysine occurs at positions 96 and 97. The Proton acceptor role is filled by Asp-176. Thr-189 carries the phosphothreonine; by autocatalysis modification. N6-acetyllysine is present on residues Lys-296 and Lys-311. The tract at residues 312–331 (KHPPAEAPVPIPPSPDTKDR) is disordered. Positions 316–326 (AEAPVPIPPSP) are enriched in pro residues. Position 325 is a phosphoserine (Ser-325). Thr-336 is subject to Phosphothreonine; by autocatalysis. Residue Thr-363 is modified to Phosphothreonine; by ATM and autocatalysis. Residues 397 to 433 (AAQLSTKSRAEGRAPNPARKACSASSKIRRLSACKQQ) form a disordered region. 2 positions are modified to phosphoserine: Gln-399 and Ser-401. Lys-416 carries the N6-acetyllysine modification. Cys-418 carries the S-palmitoyl cysteine lipid modification. An N6-acetyllysine modification is found at Lys-423. Residues 423-433 (KIRRLSACKQQ) show a composition bias toward basic residues. Ser-428 carries the post-translational modification Phosphoserine; by autocatalysis, PKA, PKC/PRKCZ and RPS6KA1. Position 430 is a cysteine methyl ester (Cys-430). Cys-430 carries the S-farnesyl cysteine lipid modification. An N6-acetyllysine modification is found at Lys-431. The propeptide at 431–433 (KQQ) is removed in mature form.

It belongs to the protein kinase superfamily. CAMK Ser/Thr protein kinase family. LKB1 subfamily. As to quaternary structure, catalytic component of a trimeric complex composed of STK11/LKB1, STRAD (STRADA or STRADB) and CAB39/MO25 (CAB39/MO25alpha or CAB39L/MO25beta): the complex tethers STK11/LKB1 in the cytoplasm and stimulates its catalytic activity. Found in a ternary complex composed of SMAD4, STK11/LKB1 and STK11IP. Interacts with p53/TP53, SMAD4, STK11IP and WDR6. Interacts with NR4A1. Interacts with NISCH; this interaction may increase STK11 activity. Interacts with PTEN; leading to PTEN phosphorylation. Interacts with SIRT1; the interaction deacetylates STK11. Interacts with CDKN1A. Mg(2+) is required as a cofactor. The cofactor is Mn(2+). Post-translationally, phosphorylated by ATM at Thr-363 following ionizing radiation (IR). Phosphorylation at Ser-428 by RPS6KA1 and/or some PKA is required to inhibit cell growth. Phosphorylation at Ser-428 is also required during neuronal polarization to mediate phosphorylation of BRSK1 and BRSK2. Phosphorylation by PKC/PRKCZ at Ser-399 in isoform 2 promotes metformin (or peroxynitrite)-induced nuclear export of STK11 and activation of AMPK. UV radiation-induced phosphorylation at Thr-363 mediates CDKN1A degradation. Acetylated. Deacetylation at Lys-48 enhances cytoplasmic localization and kinase activity in vitro. As to expression, ubiquitously expressed. Strongest expression in testis and fetal liver.

The protein resides in the nucleus. Its subcellular location is the cytoplasm. It is found in the membrane. It localises to the mitochondrion. The catalysed reaction is L-seryl-[protein] + ATP = O-phospho-L-seryl-[protein] + ADP + H(+). It carries out the reaction L-threonyl-[protein] + ATP = O-phospho-L-threonyl-[protein] + ADP + H(+). Activated by forming a complex with STRAD (STRADA or STRADB) and CAB39/MO25 (CAB39/MO25alpha or CAB39L/MO25beta): STRADA (or STRADB)-binding promotes a conformational change of STK11/LKB1 in an active conformation, which is stabilized by CAB39/MO25alpha (or CAB39L/MO25beta) interacting with the STK11/LKB1 activation loop. Sequestration in the nucleus by NR4A1 prevents it from phosphorylating and activating cytoplasmic AMPK. Functionally, tumor suppressor serine/threonine-protein kinase that controls the activity of AMP-activated protein kinase (AMPK) family members, thereby playing a role in various processes such as cell metabolism, cell polarity, apoptosis and DNA damage response. Acts by phosphorylating the T-loop of AMPK family proteins, thus promoting their activity: phosphorylates PRKAA1, PRKAA2, BRSK1, BRSK2, MARK1, MARK2, MARK3, MARK4, NUAK1, NUAK2, SIK1, SIK2, SIK3 and SNRK but not MELK. Also phosphorylates non-AMPK family proteins such as STRADA, PTEN and possibly p53/TP53. Acts as a key upstream regulator of AMPK by mediating phosphorylation and activation of AMPK catalytic subunits PRKAA1 and PRKAA2 and thereby regulates processes including: inhibition of signaling pathways that promote cell growth and proliferation when energy levels are low, glucose homeostasis in liver, activation of autophagy when cells undergo nutrient deprivation, and B-cell differentiation in the germinal center in response to DNA damage. Also acts as a regulator of cellular polarity by remodeling the actin cytoskeleton. Required for cortical neuron polarization by mediating phosphorylation and activation of BRSK1 and BRSK2, leading to axon initiation and specification. Involved in DNA damage response: interacts with p53/TP53 and recruited to the CDKN1A/WAF1 promoter to participate in transcription activation. Able to phosphorylate p53/TP53; the relevance of such result in vivo is however unclear and phosphorylation may be indirect and mediated by downstream STK11/LKB1 kinase NUAK1. Also acts as a mediator of p53/TP53-dependent apoptosis via interaction with p53/TP53: translocates to the mitochondrion during apoptosis and regulates p53/TP53-dependent apoptosis pathways. Regulates UV radiation-induced DNA damage response mediated by CDKN1A. In association with NUAK1, phosphorylates CDKN1A in response to UV radiation and contributes to its degradation which is necessary for optimal DNA repair. In terms of biological role, has a role in spermiogenesis. This Homo sapiens (Human) protein is Serine/threonine-protein kinase STK11.